We begin with the raw amino-acid sequence, 301 residues long: GTPase Era (301 aa).

In terms of domain architecture, Era-type G spans 7 to 175 (YCGFIAIVGR…AGIVRKHLPE (169 aa)). Positions 15–22 (GRPNVGKS) are G1. A GTP-binding site is contributed by 15 to 22 (GRPNVGKS). The G2 stretch occupies residues 41–45 (QTTRH). Residues 62–65 (DTPG) form a G3 region. GTP-binding positions include 62-66 (DTPGL) and 124-127 (NKVD). Positions 124-127 (NKVD) are G4. Residues 154-156 (ISA) form a G5 region. A KH type-2 domain is found at 206 to 283 (LGAELPYSVT…HLELWVKVKS (78 aa)).

Belongs to the TRAFAC class TrmE-Era-EngA-EngB-Septin-like GTPase superfamily. Era GTPase family. As to quaternary structure, monomer.

The protein resides in the cytoplasm. It is found in the cell inner membrane. Its function is as follows. An essential GTPase that binds both GDP and GTP, with rapid nucleotide exchange. Plays a role in 16S rRNA processing and 30S ribosomal subunit biogenesis and possibly also in cell cycle regulation and energy metabolism. This Salmonella heidelberg (strain SL476) protein is GTPase Era.